Reading from the N-terminus, the 252-residue chain is Zinc finger protein 511 (252 aa).

C2H2-type zinc fingers lie at residues 80–105, 107–130, and 144–169; these read FACQVAGCCQVFDALDDYEHHYHTLH, NVCSFCKRAFPSGHLLDAHILEWH, and YQCLVEGCTEKFKTSRDRKDHMVRMH. The segment at 177–221 is disordered; that stretch reads FDKPKKSRSPASAEAPGDSGERSEGEAMEICSEPVAASPAPAGER. Arginine 240 bears the Omega-N-methylarginine mark.

It belongs to the krueppel C2H2-type zinc-finger protein family.

It is found in the nucleus. Its function is as follows. May be involved in transcriptional regulation. The sequence is that of Zinc finger protein 511 from Homo sapiens (Human).